A 173-amino-acid chain; its full sequence is Development-specific protein S (173 aa).

Beta/gamma crystallin 'Greek key' domains follow at residues 2–46 and 48–86; these read ANIT…KVPP and VKAILYQNDGFAGDQIEVVANAEELGPLNNNVSSIRVIS. Residues Tyr-8, Asn-37, Thr-38, Ser-40, Gln-54, Asn-77, Asn-78, and Ser-80 each coordinate Ca(2+). Residues 87–90 form a connecting peptide region; it reads VPVQ. Beta/gamma crystallin 'Greek key' domains are found at residues 91–135 and 136–173; these read PRAR…KPQG and LAVVLFKNDNFSGDTLPVNSDAPTLGAMNNNTSSIRIS.

It belongs to the beta/gamma-crystallin family.

In terms of biological role, protein S, induced in large amounts during fruiting body formation, assembles on the surface of myxospores in the presence of calcium ions. The polypeptide is Development-specific protein S (tps) (Myxococcus xanthus).